Consider the following 243-residue polypeptide: MQFQLFSFALIILNCVDYSHCQASRWRRSKRASYGTNPICKGCLSCSKDNGCLRCQPKLFFFLRREGMRQYGECLQSCPPGYYGVRGPDMNRCSRCRIENCDSCFSRDFCIKCKSGFYSLKGQCFEECPEGFAPLDDTMVCVDGCEVGPWSEWGTCSRNNRTCGFKWGLETRTRQIVKKPAKDTIPCPTIAESRRCKMAIRHCPGGKRTTKKKDKRNKKKKKKLLERAQEQHSVVLATDRSSQ.

The N-terminal stretch at 1–21 (MQFQLFSFALIILNCVDYSHC) is a signal peptide. Cystine bridges form between C40–C46, C43–C52, C55–C74, C78–C93, C96–C104, C101–C110, C113–C124, C128–C141, C145–C187, C156–C163, and C196–C203. The stretch at 90–134 (MNRCSRCRIENCDSCFSRDFCIKCKSGFYSLKGQCFEECPEGFAP) is one FU repeat. Positions 144 to 204 (GCEVGPWSEW…RCKMAIRHCP (61 aa)) constitute a TSP type-1 domain. N160 carries an N-linked (GlcNAc...) asparagine glycan. The span at 204–224 (PGGKRTTKKKDKRNKKKKKKL) shows a compositional bias: basic residues. The tract at residues 204-243 (PGGKRTTKKKDKRNKKKKKKLLERAQEQHSVVLATDRSSQ) is disordered.

This sequence belongs to the R-spondin family. As to quaternary structure, binds heparin.

The protein localises to the secreted. Functionally, activator of the canonical Wnt signaling pathway by acting as a ligand for lgr4-6 receptors. Upon binding to lgr4-6 (lgr4, lgr5 or lgr6), lgr4-6 associate with phosphorylated lrp6 and frizzled receptors that are activated by extracellular Wnt receptors, triggering the canonical Wnt signaling pathway to increase expression of target genes. Acts both in the canonical Wnt/beta-catenin-dependent pathway and in non-canonical Wnt signaling pathway. Activates neural markers and promotes muscle formation. Overexpression blocks activin, nodal and BMP4 signaling, suggesting that it may negatively regulate the TGF-beta pathway. During embryonic development, plays a crucial role in limb specification, amplifying the Wnt signaling pathway independently of LGR4-6 receptors, possibly by acting as a direct antagonistic ligand to RNF43 and ZNRF3, hence governing the number of limbs an embryo should form. This chain is R-spondin-2 (rspo2), found in Xenopus laevis (African clawed frog).